A 208-amino-acid chain; its full sequence is Large ribosomal subunit protein uL4 (208 aa).

Positions 45 to 83 are disordered; that stretch reads RQGTHKSKTRAEVRGGGRKPYRQKGTGNARQGSTRSPLM. Over residues 69 to 80 the composition is skewed to polar residues; that stretch reads GTGNARQGSTRS.

Belongs to the universal ribosomal protein uL4 family. In terms of assembly, part of the 50S ribosomal subunit.

Its function is as follows. One of the primary rRNA binding proteins, this protein initially binds near the 5'-end of the 23S rRNA. It is important during the early stages of 50S assembly. It makes multiple contacts with different domains of the 23S rRNA in the assembled 50S subunit and ribosome. Forms part of the polypeptide exit tunnel. The sequence is that of Large ribosomal subunit protein uL4 from Chlorobium luteolum (strain DSM 273 / BCRC 81028 / 2530) (Pelodictyon luteolum).